Consider the following 887-residue polypeptide: Beta-galactosidase 9 (887 aa).

A signal peptide spans 1–30; sequence MAESIRTFSLQWRILSLIIALLVYFPILSG. N-linked (GlcNAc...) asparagine glycosylation occurs at Asn-37. Glu-194 acts as the Proton donor in catalysis. The Nucleophile role is filled by Glu-263. 5 N-linked (GlcNAc...) asparagine glycosylation sites follow: Asn-463, Asn-485, Asn-496, Asn-527, and Asn-785. The SUEL-type lectin domain occupies 791–877; that stretch reads NSVAPEVHLH…KTLAVMSRCS (87 aa). A glycan (N-linked (GlcNAc...) asparagine) is linked at Asn-881.

It belongs to the glycosyl hydrolase 35 family. As to expression, ubiquitous, with higher expression levels in siliques.

The protein localises to the secreted. The protein resides in the extracellular space. It is found in the apoplast. The enzyme catalyses Hydrolysis of terminal non-reducing beta-D-galactose residues in beta-D-galactosides.. The protein is Beta-galactosidase 9 (BGAL9) of Arabidopsis thaliana (Mouse-ear cress).